We begin with the raw amino-acid sequence, 813 residues long: ATP-dependent zinc metalloprotease FTSH 10, mitochondrial (813 aa).

A mitochondrion-targeting transit peptide spans 1 to 86 (MIFSKLGSSL…FANPRLRRFF (86 aa)). The interval 93-129 (KKNYENYYPKDSKKAPKNEQKSESRDGSKKNENENAG) is disordered. The segment covering 94-125 (KNYENYYPKDSKKAPKNEQKSESRDGSKKNEN) has biased composition (basic and acidic residues). The chain crosses the membrane as a helical span at residues 139–157 (MLIPLMAIALILSTFSLGS). Position 367–374 (367–374 (GPPGTGKT)) interacts with ATP. Position 592 (histidine 592) interacts with Zn(2+). Glutamate 593 is an active-site residue. Zn(2+)-binding residues include histidine 596 and aspartate 668. The span at 764–790 (RPFKSGETTNYDRFKSGFEESEKESQK) shows a compositional bias: basic and acidic residues. The tract at residues 764–813 (RPFKSGETTNYDRFKSGFEESEKESQKESVPVKPVEDDGIPPLEPQVVPT) is disordered.

It in the N-terminal section; belongs to the AAA ATPase family. This sequence in the C-terminal section; belongs to the peptidase M41 family. The cofactor is Zn(2+).

Its subcellular location is the mitochondrion inner membrane. Functionally, probable ATP-dependent zinc metallopeptidase. Involved in the assembly and/or stability of the complexes I and V of the mitochondrial oxidative phosphorylation system. In Arabidopsis thaliana (Mouse-ear cress), this protein is ATP-dependent zinc metalloprotease FTSH 10, mitochondrial (FTSH10).